Consider the following 379-residue polypeptide: MIENFISDPHNVKFVENFFNSELFSSLSTDYPIVMISDHYVAEELLPPILDFMDNLGYRVILLTFPPGEKNKTWETFISLQNQLIDQGVSLGSTIIGIGGGIILDMAGFLASTYCRGVPLFLIPTTLTAMIDASIGGKNGINLRGFKNRLGTFYPPKDVWICPEFLATLPKKEWLHGIPEAIKHGCIADAYIWEFLDNCRDRLFSSQEILHEFIKRNCMVKAAIVAKDPKDQNLRKTLNFGHTIAHAIETLSKGHISHGLAVSVGMMIEMRISLESGIMKNPYLIEQLDNLLKYFCLPTALQELGSLIPQHLHNEFYHPENILHTLGYDKKNLSKKAVRMVMVEHLGRAASCNGAYCATPHTDILYEVLKSECHVVCNN.

NAD(+) contacts are provided by residues 67–72 (PGEKNK), 101–105 (GIILD), 125–126 (TT), Lys138, and Lys147. Zn(2+) is bound by residues Glu180, His242, and His258.

This sequence belongs to the sugar phosphate cyclases superfamily. Dehydroquinate synthase family. NAD(+) serves as cofactor. The cofactor is Co(2+). Requires Zn(2+) as cofactor.

It localises to the cytoplasm. The catalysed reaction is 7-phospho-2-dehydro-3-deoxy-D-arabino-heptonate = 3-dehydroquinate + phosphate. It functions in the pathway metabolic intermediate biosynthesis; chorismate biosynthesis; chorismate from D-erythrose 4-phosphate and phosphoenolpyruvate: step 2/7. Functionally, catalyzes the conversion of 3-deoxy-D-arabino-heptulosonate 7-phosphate (DAHP) to dehydroquinate (DHQ). The sequence is that of 3-dehydroquinate synthase from Chlamydia caviae (strain ATCC VR-813 / DSM 19441 / 03DC25 / GPIC) (Chlamydophila caviae).